The sequence spans 232 residues: Large ribosomal subunit protein uL1 (232 aa).

It belongs to the universal ribosomal protein uL1 family. Part of the 50S ribosomal subunit.

Its function is as follows. Binds directly to 23S rRNA. The L1 stalk is quite mobile in the ribosome, and is involved in E site tRNA release. Protein L1 is also a translational repressor protein, it controls the translation of the L11 operon by binding to its mRNA. The polypeptide is Large ribosomal subunit protein uL1 (Burkholderia cenocepacia (strain ATCC BAA-245 / DSM 16553 / LMG 16656 / NCTC 13227 / J2315 / CF5610) (Burkholderia cepacia (strain J2315))).